The primary structure comprises 545 residues: Ribulokinase (545 aa).

It belongs to the ribulokinase family.

The catalysed reaction is D-ribulose + ATP = D-ribulose 5-phosphate + ADP + H(+). The enzyme catalyses L-ribulose + ATP = L-ribulose 5-phosphate + ADP + H(+). Its pathway is carbohydrate degradation; L-arabinose degradation via L-ribulose; D-xylulose 5-phosphate from L-arabinose (bacterial route): step 2/3. The polypeptide is Ribulokinase (Staphylococcus aureus (strain MRSA252)).